The following is a 522-amino-acid chain: Terpineol synthase, chloroplastic (522 aa).

Positions 242, 279, 283, 414, and 417 each coordinate (2E)-geranyl diphosphate. Residues D279 and D283 each coordinate Mg(2+). The short motif at 279–283 (DDVYD) is the DDXXD motif element. Positions 417, 421, and 425 each coordinate Mg(2+).

The protein belongs to the terpene synthase family. Tpsb subfamily. Monomer. The cofactor is Mg(2+). Mn(2+) is required as a cofactor. Confined to flowers.

Its subcellular location is the plastid. It is found in the chloroplast. It carries out the reaction (2E)-geranyl diphosphate + H2O = (S)-alpha-terpineol + diphosphate. The catalysed reaction is (2E)-geranyl diphosphate = sabinene + diphosphate. The enzyme catalyses (2E)-geranyl diphosphate = beta-myrcene + diphosphate. It catalyses the reaction (2E)-geranyl diphosphate = limonene + diphosphate. It carries out the reaction (2E)-geranyl diphosphate + H2O = 1,8-cineole + diphosphate. The catalysed reaction is (2E)-geranyl diphosphate = alpha-pinene + diphosphate. It functions in the pathway secondary metabolite biosynthesis; terpenoid biosynthesis. Monoterpene synthase (TPS) involved in the biosynthesis of monoterpene natural products of the 'cineole cassette', volatile compounds present in floral scent. Catalyzes the conversion of (2E)-geranyl diphosphate (GPP) into alpha-terpineol and, as minor products, sabinene, beta-myrcene, limonene, alpha-pinene and 1,8-cineole. The chain is Terpineol synthase, chloroplastic from Nicotiana langsdorffii (Langsdorff's tobacco).